The following is a 192-amino-acid chain: Ribosomal RNA small subunit methyltransferase G (192 aa).

S-adenosyl-L-methionine is bound by residues Gly63, Leu68, 112-113, and Arg125; that span reads IE.

The protein belongs to the methyltransferase superfamily. RNA methyltransferase RsmG family.

It is found in the cytoplasm. The catalysed reaction is guanosine(527) in 16S rRNA + S-adenosyl-L-methionine = N(7)-methylguanosine(527) in 16S rRNA + S-adenosyl-L-homocysteine. In terms of biological role, specifically methylates the N7 position of guanine in position 527 of 16S rRNA. The sequence is that of Ribosomal RNA small subunit methyltransferase G from Rickettsia africae (strain ESF-5).